A 247-amino-acid polypeptide reads, in one-letter code: Ice-binding protein (247 aa).

The N-terminal stretch at 1–19 (MTFSILSIFVFGLISSSVA) is a signal peptide. N-linked (GlcNAc...) asparagine glycosylation occurs at asparagine 219.

It belongs to the ice-binding protein family.

It is found in the secreted. Binds ice crystals and most probably inhibits their growth in order to prevent cell damage from extracellular ice. This is Ice-binding protein from Flammulina populicola (Enokitake mushroom).